The following is a 73-amino-acid chain: Tetrahydromethanopterin S-methyltransferase subunit F (73 aa).

A helical transmembrane segment spans residues 52–72; that stretch reads IGFAAGFLFSLLMVIVLPLLF.

The protein belongs to the MtrF family. As to quaternary structure, the complex is composed of 8 subunits; MtrA, MtrB, MtrC, MtrD, MtrE, MtrF, MtrG and MtrH.

The protein localises to the cell membrane. The enzyme catalyses 5-methyl-5,6,7,8-tetrahydromethanopterin + coenzyme M + 2 Na(+)(in) = 5,6,7,8-tetrahydromethanopterin + methyl-coenzyme M + 2 Na(+)(out). The protein operates within one-carbon metabolism; methanogenesis from CO(2); methyl-coenzyme M from 5,10-methylene-5,6,7,8-tetrahydromethanopterin: step 2/2. In terms of biological role, part of a complex that catalyzes the formation of methyl-coenzyme M and tetrahydromethanopterin from coenzyme M and methyl-tetrahydromethanopterin. This is an energy-conserving, sodium-ion translocating step. The sequence is that of Tetrahydromethanopterin S-methyltransferase subunit F from Methanosarcina barkeri (strain Fusaro / DSM 804).